We begin with the raw amino-acid sequence, 308 residues long: Membrane protein insertase YidC 1 (308 aa).

The N-terminal stretch at 1-22 (MKSIKRFALSAMGVAMLLVLTG) is a signal peptide. Cysteine 23 carries the N-palmitoyl cysteine lipid modification. Cysteine 23 is lipidated: S-diacylglycerol cysteine. A run of 5 helical transmembrane segments spans residues 60–80 (FGVAIIIVTIIVRLIILPLGI), 135–155 (FGGVGCFPILLQMPFFSAIYF), 168–188 (YLGIPLGSPSMILVACAGVLY), 211–226 (MIYMSPLMIVVFSLFS), and 232–252 (LYWVVGGFMMILQQFIVNYIV). A disordered region spans residues 263-308 (ELAKNPPKASAFSKPSGRKDVTPEQPTAITSKKKHKNRNAGKQRSR). The segment covering 293–308 (SKKKHKNRNAGKQRSR) has biased composition (basic residues).

The protein belongs to the OXA1/ALB3/YidC family. Type 2 subfamily.

Its subcellular location is the cell membrane. Functionally, required for the insertion and/or proper folding and/or complex formation of integral membrane proteins into the membrane. Involved in integration of membrane proteins that insert both dependently and independently of the Sec translocase complex, as well as at least some lipoproteins. The chain is Membrane protein insertase YidC 1 from Streptococcus pneumoniae serotype 4 (strain ATCC BAA-334 / TIGR4).